Reading from the N-terminus, the 340-residue chain is Acidic endochitinase WIN6 (340 aa).

Positions 1-22 are cleaved as a signal peptide; that stretch reads MSVWALFAFFSLFLSLSVRGSA. One can recognise a Chitin-binding type-1 domain in the interval 23–63; sequence EQCGRQAGDALCPGGLCCSSYGWCGTTVDYCGIGCQSQCDG. Intrachain disulfides connect Cys-25-Cys-40, Cys-34-Cys-46, Cys-39-Cys-53, and Cys-57-Cys-61. Positions 64–85 are spacer; that stretch reads GGGGDGGDDGCDGGDDGGGDGD. The segment at 86-340 is chitinase; it reads DGYLSDIIPK…YGLSGLKDTM (255 aa). Intrachain disulfides connect Cys-110/Cys-172, Cys-183/Cys-191, and Cys-290/Cys-323. The Proton donor role is filled by Glu-154.

The protein belongs to the glycosyl hydrolase 19 family. Chitinase class I subfamily.

The catalysed reaction is Random endo-hydrolysis of N-acetyl-beta-D-glucosaminide (1-&gt;4)-beta-linkages in chitin and chitodextrins.. Functionally, defense against chitin-containing fungal pathogens. The chain is Acidic endochitinase WIN6 (WIN6) from Populus trichocarpa (Western balsam poplar).